Consider the following 1118-residue polypeptide: Ubiquitin carboxyl-terminal hydrolase 8 (1118 aa).

Residues 33 to 116 (TKSYVHSALK…ESLKLRYEEA (84 aa)) enclose the MIT domain. Basic and acidic residues-rich tracts occupy residues 120-146 (KKLE…REDG) and 158-177 (LDSK…KCET). Residues 120–177 (KKLEEKDRQEEAQRLQQKRQETGREDGGTLAKGSLENVLDSKDKTQKSNGEKNEKCET) form a disordered region. Ser160 bears the Phosphoserine mark. Residues 195–313 (KNISLIIMDA…WLLCYPQYTT (119 aa)) form the Rhodanese domain. Phosphoserine is present on residues Ser392 and Ser400. The segment at 402–447 (KNVPQIDRTKKPAVKLPEEHRIKSESTNHEQQSPQSGKVIPDRSTK) is disordered. Residues 405-413 (PQIDRTKKP) carry the SH3-binding motif. Residues 417-429 (LPEEHRIKSESTN) are compositionally biased toward basic and acidic residues. Ser452 bears the Phosphoserine mark. A compositionally biased stretch (basic and acidic residues) spans 475 to 573 (KNKQEKELRE…AKKSVEDRGK (99 aa)). 2 disordered regions span residues 475–648 (KNKQ…GRIV) and 679–746 (YPPE…ENKP). Thr577 is subject to Phosphothreonine. The span at 618-645 (TFREDTDDTERNKAQREPLTRARSEEMG) shows a compositional bias: basic and acidic residues. The span at 716 to 726 (SYSSPDITQAI) shows a compositional bias: polar residues. A phosphoserine mark is found at Ser718 and Ser719. Positions 777–1109 (TGLRNLGNTC…AAYILFYTSL (333 aa)) constitute a USP domain. The active-site Nucleophile is Cys786. Phosphothreonine is present on Thr945. The Proton acceptor role is filled by His1067.

This sequence belongs to the peptidase C19 family. As to quaternary structure, forms a ternary complex with RNF128 and OTUB1. Interacts (via C-terminal UCH catalytic domain) with OTUB1 isoform 1. Interacts with STAM2 (via SH3 domain). Interacts with DNAJB3, EGFR, EPS15, RASGRF1, RNF41, YWHAE, YWHAG and YWHAZ. Interacts with NBR1, RASGRF1, RNF41 and IST1. Associates with the ESCRT-0 complex and with microtubules. Interacts with BIRC6/bruce and KIF23/MKLP1. (Microbial infection) Interacts with Zika virus non-structural protein 1. Phosphorylation of Ser-718 is essential for interaction with YWHAE and for cytosol localization. Undergoes dephosphorylation at Ser-718 in the M phase. Tyrosine-phosphorylated in its N-terminal half in an EGFR-dependent manner. In terms of processing, ubiquitinated. Inactive form is mostly monoubiquitinated, but polyubiquitination happens too. Ubiquitination is increased in EGF-stimulated cells. Ubiquitination of active form is undetectable, suggesting a possibility that USP8 deubiquitinates itself, thereby regulating its own function.

It localises to the cytoplasm. It is found in the nucleus. Its subcellular location is the endosome membrane. The protein localises to the cell membrane. The enzyme catalyses Thiol-dependent hydrolysis of ester, thioester, amide, peptide and isopeptide bonds formed by the C-terminal Gly of ubiquitin (a 76-residue protein attached to proteins as an intracellular targeting signal).. In terms of biological role, hydrolase that can remove conjugated ubiquitin from proteins and therefore plays an important regulatory role at the level of protein turnover by preventing degradation. Converts both 'Lys-48' an 'Lys-63'-linked ubiquitin chains. Catalytic activity is enhanced in the M phase. Involved in cell proliferation. Required to enter into S phase in response to serum stimulation. May regulate T-cell anergy mediated by RNF128 via the formation of a complex containing RNF128 and OTUB1. Probably regulates the stability of STAM2 and RASGRF1. Regulates endosomal ubiquitin dynamics, cargo sorting, membrane traffic at early endosomes, and maintenance of ESCRT-0 stability. The level of protein ubiquitination on endosomes is essential for maintaining the morphology of the organelle. Deubiquitinates EPS15 and controls tyrosine kinase stability. Removes conjugated ubiquitin from EGFR thus regulating EGFR degradation and downstream MAPK signaling. Involved in acrosome biogenesis through interaction with the spermatid ESCRT-0 complex and microtubules. Deubiquitinates BIRC6/bruce and KIF23/MKLP1. Deubiquitinates BACE1 which inhibits BACE1 lysosomal degradation and modulates BACE-mediated APP cleavage and amyloid-beta formation. In Homo sapiens (Human), this protein is Ubiquitin carboxyl-terminal hydrolase 8.